The primary structure comprises 89 residues: MYTLELLLKGNPAPIVVHQKEEEAANRAYQSIVNALQSGSPQSLELTCDRTGKKVFLLTGELCGVQMTSKSGSASPMGTRPGFLAQLQS.

The segment at 69–89 (SKSGSASPMGTRPGFLAQLQS) is disordered.

The protein belongs to the UPF0367 family.

This chain is UPF0367 protein CYB_2632, found in Synechococcus sp. (strain JA-2-3B'a(2-13)) (Cyanobacteria bacterium Yellowstone B-Prime).